Reading from the N-terminus, the 945-residue chain is Microtubule cross-linking factor 3 (945 aa).

Low complexity-rich tracts occupy residues 1-23 (MSQP…AAAT), 72-93 (QQQL…TSGT), and 110-126 (PKGA…GAEG). A signal peptide spans 1–25 (MSQPPSGGAAPAATSASAAAAATEA). Disordered stretches follow at residues 1-250 (MSQP…SYWK), 265-293 (KERA…PVAG), 307-366 (SPMA…TLKN), and 494-522 (LSLK…DNED). The segment covering 141-151 (GQPEEAPREIE) has biased composition (basic and acidic residues). Residues 164–179 (GGVGGGGEGGGAGGGP) show a composition bias toward gly residues. Residues 219–235 (TAATSKTPGPGSRNSGS) are compositionally biased toward low complexity. Over residues 236–247 (GSTGSGSGGGGS) the composition is skewed to gly residues. The segment covering 328-345 (AMQAAAPPSSQPHSQQLQ) has biased composition (low complexity). Residues 340-724 (HSQQLQEQED…GKVMQLQYEN (385 aa)) adopt a coiled-coil conformation. Basic and acidic residues-rich tracts occupy residues 353-366 (EMEK…TLKN) and 494-511 (LSLK…EKKA). Phosphoserine is present on S567. Residues 741 to 811 (GIRGSPRDSD…PWPKSFSDRQ (71 aa)) form a disordered region. Residues 745 to 766 (SPRDSDAESDAGKKESDDDSRP) are compositionally biased toward basic and acidic residues. Residue S779 is modified to Phosphoserine. A coiled-coil region spans residues 809–833 (DRQQMKDIRSEAERLGKTIDRLIAD). A helical transmembrane segment spans residues 913–933 (PIILLILILVLFSSLSYTTIF).

Belongs to the MTCL family.

The protein localises to the membrane. In Mus musculus (Mouse), this protein is Microtubule cross-linking factor 3 (Mtcl3).